The chain runs to 162 residues: uncharacterized protein (162 aa).

Residues 6 to 24 traverse the membrane as a helical segment; sequence SYLISIFYIILITSETTAF.

It localises to the membrane. This is an uncharacterized protein from Caenorhabditis elegans.